We begin with the raw amino-acid sequence, 226 residues long: DNA mismatch repair protein MutH (226 aa).

This sequence belongs to the MutH family.

The protein localises to the cytoplasm. Functionally, sequence-specific endonuclease that cleaves unmethylated GATC sequences. It is involved in DNA mismatch repair. This is DNA mismatch repair protein MutH from Haemophilus ducreyi (strain 35000HP / ATCC 700724).